An 84-amino-acid polypeptide reads, in one-letter code: Tenecin-1 (84 aa).

A signal peptide spans 1–19 (MKLTIFALVACFFILQIAA). A propeptide spanning residues 20–41 (FPLEEAATAEEIEQGEHIRVKR) is cleaved from the precursor. Cystine bridges form between Cys-44–Cys-75, Cys-61–Cys-81, and Cys-65–Cys-83.

The protein belongs to the invertebrate defensin family. Type 1 subfamily.

The protein localises to the secreted. Bactericidal protein produced in response to injury. It is cytotoxic to Gram-positive bacteria. The polypeptide is Tenecin-1 (Tenebrio molitor (Yellow mealworm beetle)).